The sequence spans 406 residues: S-adenosylmethionine synthase (406 aa).

His16 lines the ATP pocket. Position 18 (Asp18) interacts with Mg(2+). Glu44 is a K(+) binding site. L-methionine is bound by residues Glu57 and Gln109. The segment at 109-119 is flexible loop; that stretch reads QSPQIAQGVDE. ATP contacts are provided by residues 174-176, 249-250, Asp258, 264-265, Ala281, and Lys285; these read DAK, RF, and RK. Asp258 provides a ligand contact to L-methionine. Residue Lys289 participates in L-methionine binding.

Belongs to the AdoMet synthase family. As to quaternary structure, homotetramer; dimer of dimers. Mg(2+) serves as cofactor. The cofactor is K(+).

It is found in the cytoplasm. The catalysed reaction is L-methionine + ATP + H2O = S-adenosyl-L-methionine + phosphate + diphosphate. The protein operates within amino-acid biosynthesis; S-adenosyl-L-methionine biosynthesis; S-adenosyl-L-methionine from L-methionine: step 1/1. In terms of biological role, catalyzes the formation of S-adenosylmethionine (AdoMet) from methionine and ATP. The overall synthetic reaction is composed of two sequential steps, AdoMet formation and the subsequent tripolyphosphate hydrolysis which occurs prior to release of AdoMet from the enzyme. The protein is S-adenosylmethionine synthase of Sphingopyxis alaskensis (strain DSM 13593 / LMG 18877 / RB2256) (Sphingomonas alaskensis).